The following is a 77-amino-acid chain: MKNYSKNATHLITVLLFSFVVILLIIPSKCEAVSNDMQPLEARSADLIPEPRYIIDVPPRCPPGSKFIKNRCRVIVP.

The N-terminal stretch at 1–32 (MKNYSKNATHLITVLLFSFVVILLIIPSKCEA) is a signal peptide. The propeptide occupies 33–52 (VSNDMQPLEARSADLIPEPR). Cysteine 61 and cysteine 72 are disulfide-bonded.

This sequence belongs to the secapin family. Expressed by the venom gland.

It is found in the secreted. Functionally, nontoxic peptide. The sequence is that of Secapin from Vespa velutina nigrithorax (Hornet).